We begin with the raw amino-acid sequence, 204 residues long: Imidazoleglycerol-phosphate dehydratase (204 aa).

The protein belongs to the imidazoleglycerol-phosphate dehydratase family.

The protein localises to the cytoplasm. The catalysed reaction is D-erythro-1-(imidazol-4-yl)glycerol 3-phosphate = 3-(imidazol-4-yl)-2-oxopropyl phosphate + H2O. It functions in the pathway amino-acid biosynthesis; L-histidine biosynthesis; L-histidine from 5-phospho-alpha-D-ribose 1-diphosphate: step 6/9. The protein is Imidazoleglycerol-phosphate dehydratase of Corynebacterium urealyticum (strain ATCC 43042 / DSM 7109).